The primary structure comprises 338 residues: Aspartate carbamoyltransferase catalytic subunit (338 aa).

R72 and T73 together coordinate carbamoyl phosphate. Residue K100 participates in L-aspartate binding. Residues R122, H152, and Q155 each coordinate carbamoyl phosphate. R186 and R243 together coordinate L-aspartate. Residues G284 and P285 each contribute to the carbamoyl phosphate site.

This sequence belongs to the aspartate/ornithine carbamoyltransferase superfamily. ATCase family. As to quaternary structure, heterododecamer (2C3:3R2) of six catalytic PyrB chains organized as two trimers (C3), and six regulatory PyrI chains organized as three dimers (R2).

The enzyme catalyses carbamoyl phosphate + L-aspartate = N-carbamoyl-L-aspartate + phosphate + H(+). It functions in the pathway pyrimidine metabolism; UMP biosynthesis via de novo pathway; (S)-dihydroorotate from bicarbonate: step 2/3. Its function is as follows. Catalyzes the condensation of carbamoyl phosphate and aspartate to form carbamoyl aspartate and inorganic phosphate, the committed step in the de novo pyrimidine nucleotide biosynthesis pathway. In Acinetobacter baylyi (strain ATCC 33305 / BD413 / ADP1), this protein is Aspartate carbamoyltransferase catalytic subunit.